The primary structure comprises 198 residues: MEFYPIAIEKLIEEFAKLPGIGKKTAQRLTLYVLNLPREEVEEFANALIKARGTIKYCSVCGNFTDKDPCAICSNPNRDKNTICVVEHPKDIMTMEKVREYNGMYHVLHGTISPMAGRGPNDIKLKELISRINGEIKEVIVATNPNVEGEATAMYISKILKPLGAKVTRIAHGIPVGGDLEYADEVTLAKALEGRKEI.

A C4-type zinc finger spans residues Cys-58 to Cys-73. Residues Asn-81 to Pro-175 form the Toprim domain.

The protein belongs to the RecR family.

Its function is as follows. May play a role in DNA repair. It seems to be involved in an RecBC-independent recombinational process of DNA repair. It may act with RecF and RecO. The chain is Recombination protein RecR from Clostridium tetani (strain Massachusetts / E88).